Consider the following 413-residue polypeptide: Arginine biosynthesis bifunctional protein ArgJ (413 aa).

Positions 163, 189, 200, 286, 408, and 413 each coordinate substrate. Threonine 200 acts as the Nucleophile in catalysis.

It belongs to the ArgJ family. In terms of assembly, heterotetramer of two alpha and two beta chains.

It localises to the cytoplasm. It catalyses the reaction N(2)-acetyl-L-ornithine + L-glutamate = N-acetyl-L-glutamate + L-ornithine. It carries out the reaction L-glutamate + acetyl-CoA = N-acetyl-L-glutamate + CoA + H(+). It functions in the pathway amino-acid biosynthesis; L-arginine biosynthesis; L-ornithine and N-acetyl-L-glutamate from L-glutamate and N(2)-acetyl-L-ornithine (cyclic): step 1/1. It participates in amino-acid biosynthesis; L-arginine biosynthesis; N(2)-acetyl-L-ornithine from L-glutamate: step 1/4. Functionally, catalyzes two activities which are involved in the cyclic version of arginine biosynthesis: the synthesis of N-acetylglutamate from glutamate and acetyl-CoA as the acetyl donor, and of ornithine by transacetylation between N(2)-acetylornithine and glutamate. This Staphylococcus aureus (strain Mu50 / ATCC 700699) protein is Arginine biosynthesis bifunctional protein ArgJ.